An 88-amino-acid chain; its full sequence is Small ribosomal subunit protein uS17 (88 aa).

The protein belongs to the universal ribosomal protein uS17 family. Part of the 30S ribosomal subunit.

One of the primary rRNA binding proteins, it binds specifically to the 5'-end of 16S ribosomal RNA. This is Small ribosomal subunit protein uS17 from Leuconostoc mesenteroides subsp. mesenteroides (strain ATCC 8293 / DSM 20343 / BCRC 11652 / CCM 1803 / JCM 6124 / NCDO 523 / NBRC 100496 / NCIMB 8023 / NCTC 12954 / NRRL B-1118 / 37Y).